A 302-amino-acid chain; its full sequence is Proline dehydrogenase 1 (302 aa).

A substrate-binding site is contributed by K95. D129 is a catalytic residue. FAD-binding residues include M130 and Q158. Residue R179 is part of the active site. FAD is bound by residues 182-184 (KGA) and 221-222 (TH). 283–284 (RR) provides a ligand contact to substrate.

It belongs to the proline dehydrogenase family. FAD is required as a cofactor.

It catalyses the reaction L-proline + a quinone = (S)-1-pyrroline-5-carboxylate + a quinol + H(+). Its pathway is amino-acid degradation; L-proline degradation into L-glutamate; L-glutamate from L-proline: step 1/2. In terms of biological role, converts proline to delta-1-pyrroline-5-carboxylate. The protein is Proline dehydrogenase 1 (fadM) of Bacillus subtilis (strain 168).